A 559-amino-acid polypeptide reads, in one-letter code: Potassium-transporting ATPase potassium-binding subunit (559 aa).

The next 13 membrane-spanning stretches (helical) occupy residues 5–25, 27–47, 63–83, 132–152, 170–190, 253–273, 283–303, 327–347, 356–376, 379–399, 416–436, 484–504, and 524–544; these read GFLL…PLGS, LARL…RILW, LLAL…LLFW, GLTV…FALI, LVRI…LFFI, LAQM…FGEA, LLWA…WAEV, FGVL…CGAV, ALGG…FGGV, GLYG…LMIG, MTAL…ALAM, LLAF…MAIA, and GALF…LTFI.

The protein belongs to the KdpA family. As to quaternary structure, the system is composed of three essential subunits: KdpA, KdpB and KdpC.

It localises to the cell inner membrane. In terms of biological role, part of the high-affinity ATP-driven potassium transport (or Kdp) system, which catalyzes the hydrolysis of ATP coupled with the electrogenic transport of potassium into the cytoplasm. This subunit binds the periplasmic potassium ions and delivers the ions to the membrane domain of KdpB through an intramembrane tunnel. This chain is Potassium-transporting ATPase potassium-binding subunit, found in Salmonella heidelberg (strain SL476).